The primary structure comprises 610 residues: Tyrosine-protein kinase Drl (610 aa).

The first 20 residues, 1–20 (MAPNLLTIGLLLTLIASGQA), serve as a signal peptide directing secretion. The Extracellular segment spans residues 21 to 242 (HLNIFLNLHE…RENLVPPASG (222 aa)). One can recognise a WIF domain in the interval 24–155 (IFLNLHEVLR…NLIFKRKKIC (132 aa)). Asn63, Asn99, and Asn143 each carry an N-linked (GlcNAc...) asparagine glycan. Residues 202 to 230 (QAPEKQRPVVTESPVGRGNSGGSKRDFDP) form a disordered region. Residues 243–263 (LVTLIVGGILALVLVSTLILI) traverse the membrane as a helical segment. Residues 264-610 (AYCAKGPSKR…EFHTQITRYV (347 aa)) are Cytoplasmic-facing. One can recognise a Protein kinase domain in the interval 343 to 606 (VRLSCLVQEG…ICLSEFHTQI (264 aa)). Residues 349–357 (VQEGNFGRI) and Lys371 contribute to the ATP site. Asp468 functions as the Proton acceptor in the catalytic mechanism. Tyr498 is subject to Phosphotyrosine; by autocatalysis.

Belongs to the protein kinase superfamily. Tyr protein kinase family. In the embryonic abdominal hemisegment, expression is restricted to cell body, axon and growth cone of a cluster of 20 ventral nerve cord interneurons. During muscle growth and attachment events in the embryonic abdominal hemisegment, expression is in somatic muscle fibers 21-23 at 10-13 hours and 2 patches of approximately 15 neighboring epidermal cells (dorsal and ventral attachment sites) at 6-13 hours.

It is found in the cell membrane. It carries out the reaction L-tyrosyl-[protein] + ATP = O-phospho-L-tyrosyl-[protein] + ADP + H(+). Functionally, probable coreceptor of Wnt proteins. Involved in neuronal pathway recognition and ventral muscle attachment site selection. Non-vital for development. May be part of a signal transduction cascade involved in learning and possibly memory. This is Tyrosine-protein kinase Drl (drl) from Drosophila melanogaster (Fruit fly).